The sequence spans 540 residues: Chaperonin GroEL 2 (540 aa).

ATP is bound by residues 30-33, Lys51, 87-91, Gly415, 480-482, and Asp496; these read TLGP, DGTTT, and NAL.

This sequence belongs to the chaperonin (HSP60) family. In terms of assembly, forms a cylinder of 14 subunits composed of two heptameric rings stacked back-to-back. Interacts with the co-chaperonin GroES.

It is found in the cytoplasm. The catalysed reaction is ATP + H2O + a folded polypeptide = ADP + phosphate + an unfolded polypeptide.. In terms of biological role, together with its co-chaperonin GroES, plays an essential role in assisting protein folding. The GroEL-GroES system forms a nano-cage that allows encapsulation of the non-native substrate proteins and provides a physical environment optimized to promote and accelerate protein folding. The sequence is that of Chaperonin GroEL 2 from Protochlamydia amoebophila (strain UWE25).